We begin with the raw amino-acid sequence, 100 residues long: Biogenesis of lysosome-related organelles complex 1 subunit CNL1 (100 aa).

Residues 25 to 46 are a coiled coil; it reads SDRVKSLELEATRLVQRQNELV.

Belongs to the BLOC1S4 family. As to quaternary structure, component of the biogenesis of lysosome-related organelles complex-1 (BLOC-1).

It localises to the cytoplasm. Component of the biogenesis of lysosome-related organelles complex-1 (BLOC-1), a complex that is involved in endosomal cargo sorting. This Candida glabrata (strain ATCC 2001 / BCRC 20586 / JCM 3761 / NBRC 0622 / NRRL Y-65 / CBS 138) (Yeast) protein is Biogenesis of lysosome-related organelles complex 1 subunit CNL1 (CLN1).